We begin with the raw amino-acid sequence, 376 residues long: Chaperone protein DnaJ (376 aa).

One can recognise a J domain in the interval 4 to 68; the sequence is DYYQLLGVAR…ETRARYDQFG (65 aa). The segment at 135–217 adopts a CR-type zinc-finger fold; sequence GGEKEIRVTH…CGGAGRLRRP (83 aa). 8 residues coordinate Zn(2+): C148, C151, C165, C168, C191, C194, C205, and C208. CXXCXGXG motif repeat units follow at residues 148-155, 165-172, 191-198, and 205-212; these read CGTCQGSG, CTTCGGAG, CPTCEGSG, and CDDCGGAG.

It belongs to the DnaJ family. As to quaternary structure, homodimer. Requires Zn(2+) as cofactor.

It is found in the cytoplasm. Its function is as follows. Participates actively in the response to hyperosmotic and heat shock by preventing the aggregation of stress-denatured proteins and by disaggregating proteins, also in an autonomous, DnaK-independent fashion. Unfolded proteins bind initially to DnaJ; upon interaction with the DnaJ-bound protein, DnaK hydrolyzes its bound ATP, resulting in the formation of a stable complex. GrpE releases ADP from DnaK; ATP binding to DnaK triggers the release of the substrate protein, thus completing the reaction cycle. Several rounds of ATP-dependent interactions between DnaJ, DnaK and GrpE are required for fully efficient folding. Also involved, together with DnaK and GrpE, in the DNA replication of plasmids through activation of initiation proteins. This is Chaperone protein DnaJ from Synechococcus sp. (strain ATCC 27144 / PCC 6301 / SAUG 1402/1) (Anacystis nidulans).